Here is a 904-residue protein sequence, read N- to C-terminus: Protein translocase subunit SecA (904 aa).

Residues Q87, 105–109, and D512 each bind ATP; that span reads GEGKT. A disordered region spans residues 851-904; it reads LAKQQQLSHESDNSALMSQEEANVAASLERKVGRNDPCPCGSGKKYKQCHGRLQ. The segment covering 853–871 has biased composition (polar residues); it reads KQQQLSHESDNSALMSQEE. The Zn(2+) site is built by C888, C890, C899, and H900. Positions 894 to 904 are enriched in basic residues; the sequence is KKYKQCHGRLQ.

This sequence belongs to the SecA family. Monomer and homodimer. Part of the essential Sec protein translocation apparatus which comprises SecA, SecYEG and auxiliary proteins SecDF-YajC and YidC. The cofactor is Zn(2+).

The protein resides in the cell inner membrane. The protein localises to the cytoplasm. It catalyses the reaction ATP + H2O + cellular proteinSide 1 = ADP + phosphate + cellular proteinSide 2.. Part of the Sec protein translocase complex. Interacts with the SecYEG preprotein conducting channel. Has a central role in coupling the hydrolysis of ATP to the transfer of proteins into and across the cell membrane, serving both as a receptor for the preprotein-SecB complex and as an ATP-driven molecular motor driving the stepwise translocation of polypeptide chains across the membrane. The sequence is that of Protein translocase subunit SecA from Yersinia enterocolitica serotype O:8 / biotype 1B (strain NCTC 13174 / 8081).